The following is a 279-amino-acid chain: Phycobilisome rod-core linker polypeptide CpcG1 (279 aa).

The 179-residue stretch at 11-189 folds into the PBS-linker domain; the sequence is SSQNQRVEGY…YWRDRQTLNA (179 aa).

This sequence belongs to the phycobilisome linker protein family. Part of the phycobilisome, a hemidiscoidal structure that is composed of two distinct substructures: a core complex and a number of rods radiating from the core.

It is found in the cellular thylakoid membrane. In terms of biological role, rod-core linker protein required for attachment of phycocyanin to allophycocyanin in cores of phycobilisomes. Functionally, linker polypeptides determine the state of aggregation and the location of the disk-shaped phycobiliprotein units within the phycobilisome and modulate their spectroscopic properties in order to mediate a directed and optimal energy transfer. In Nostoc sp. (strain PCC 7120 / SAG 25.82 / UTEX 2576), this protein is Phycobilisome rod-core linker polypeptide CpcG1.